The sequence spans 435 residues: Methylenetetrahydrofolate--tRNA-(uracil-5-)-methyltransferase TrmFO (435 aa).

9-14 (GGGLAG) is a binding site for FAD.

Belongs to the MnmG family. TrmFO subfamily. FAD serves as cofactor.

It localises to the cytoplasm. It carries out the reaction uridine(54) in tRNA + (6R)-5,10-methylene-5,6,7,8-tetrahydrofolate + NADH + H(+) = 5-methyluridine(54) in tRNA + (6S)-5,6,7,8-tetrahydrofolate + NAD(+). It catalyses the reaction uridine(54) in tRNA + (6R)-5,10-methylene-5,6,7,8-tetrahydrofolate + NADPH + H(+) = 5-methyluridine(54) in tRNA + (6S)-5,6,7,8-tetrahydrofolate + NADP(+). In terms of biological role, catalyzes the folate-dependent formation of 5-methyl-uridine at position 54 (M-5-U54) in all tRNAs. In Citrifermentans bemidjiense (strain ATCC BAA-1014 / DSM 16622 / JCM 12645 / Bem) (Geobacter bemidjiensis), this protein is Methylenetetrahydrofolate--tRNA-(uracil-5-)-methyltransferase TrmFO.